Here is a 227-residue protein sequence, read N- to C-terminus: uncharacterized protein (227 aa).

Residues 3–119 (RADFCIIGLG…STMGIREALI (117 aa)) form the RCK N-terminal domain. The region spanning 134 to 221 (HGLENEIINL…LNKYLNYINP (88 aa)) is the RCK C-terminal domain.

This is an uncharacterized protein from Mycoplasma genitalium (strain ATCC 33530 / DSM 19775 / NCTC 10195 / G37) (Mycoplasmoides genitalium).